The sequence spans 269 residues: Formamidopyrimidine-DNA glycosylase (269 aa).

Residue Pro2 is the Schiff-base intermediate with DNA of the active site. Glu3 functions as the Proton donor in the catalytic mechanism. The active-site Proton donor; for beta-elimination activity is Lys57. Positions 90, 109, and 150 each coordinate DNA. The FPG-type zinc finger occupies 235–269; it reads QVYGRKGEPCRVCGTPIVATKHAQRATFYCRQCQK. The active-site Proton donor; for delta-elimination activity is Arg259.

It belongs to the FPG family. Monomer. The cofactor is Zn(2+).

It catalyses the reaction Hydrolysis of DNA containing ring-opened 7-methylguanine residues, releasing 2,6-diamino-4-hydroxy-5-(N-methyl)formamidopyrimidine.. It carries out the reaction 2'-deoxyribonucleotide-(2'-deoxyribose 5'-phosphate)-2'-deoxyribonucleotide-DNA = a 3'-end 2'-deoxyribonucleotide-(2,3-dehydro-2,3-deoxyribose 5'-phosphate)-DNA + a 5'-end 5'-phospho-2'-deoxyribonucleoside-DNA + H(+). Involved in base excision repair of DNA damaged by oxidation or by mutagenic agents. Acts as a DNA glycosylase that recognizes and removes damaged bases. Has a preference for oxidized purines, such as 7,8-dihydro-8-oxoguanine (8-oxoG). Has AP (apurinic/apyrimidinic) lyase activity and introduces nicks in the DNA strand. Cleaves the DNA backbone by beta-delta elimination to generate a single-strand break at the site of the removed base with both 3'- and 5'-phosphates. This is Formamidopyrimidine-DNA glycosylase from Escherichia coli O7:K1 (strain IAI39 / ExPEC).